Consider the following 234-residue polypeptide: MAHVAKKFKAASAKVDRVKRYKLDEAMSLVKQTATKKFDETVDAAINLGVDPKHADQVVRGAVVLPHGMGKAVKIAVFAKGDKAREAQEAGADIVGAEDLAEKVQGGFMDFDKVLATPDMMGVVGRLGKVLGPRGLMPNPKVGTVSADIARAVKEQKAGKVEFRVEKAGIVHVPFGKASFEPEKLKANFSAIMEIIYKAKPQTAKGVYVKNVTLSTTMGPGIKLDLSELAAAHG.

This sequence belongs to the universal ribosomal protein uL1 family. As to quaternary structure, part of the 50S ribosomal subunit.

Functionally, binds directly to 23S rRNA. The L1 stalk is quite mobile in the ribosome, and is involved in E site tRNA release. Protein L1 is also a translational repressor protein, it controls the translation of the L11 operon by binding to its mRNA. The polypeptide is Large ribosomal subunit protein uL1 (Anaeromyxobacter sp. (strain Fw109-5)).